Here is a 165-residue protein sequence, read N- to C-terminus: Ribosome maturation factor RimM (165 aa).

The region spanning 94–165 (EDEFYIADLN…YGILNYKREV (72 aa)) is the PRC barrel domain.

Belongs to the RimM family. As to quaternary structure, binds ribosomal protein uS19.

The protein localises to the cytoplasm. An accessory protein needed during the final step in the assembly of 30S ribosomal subunit, possibly for assembly of the head region. Essential for efficient processing of 16S rRNA. May be needed both before and after RbfA during the maturation of 16S rRNA. It has affinity for free ribosomal 30S subunits but not for 70S ribosomes. The sequence is that of Ribosome maturation factor RimM from Rickettsia canadensis (strain McKiel).